Reading from the N-terminus, the 281-residue chain is Probable ABC transporter ATP-binding protein AZC_3926 (281 aa).

Residues 1–38 (MNVLSMFGRNATRETSSPAATAGRYADEGDWEGDDHQP) form a disordered region. An ABC transporter domain is found at 45-277 (LAAFGLAKSY…PDVRRLYLGE (233 aa)). 77–84 (GPNGAGKT) contacts ATP.

Belongs to the ABC transporter superfamily.

The sequence is that of Probable ABC transporter ATP-binding protein AZC_3926 from Azorhizobium caulinodans (strain ATCC 43989 / DSM 5975 / JCM 20966 / LMG 6465 / NBRC 14845 / NCIMB 13405 / ORS 571).